The chain runs to 185 residues: Ribosome-recycling factor (185 aa).

The protein belongs to the RRF family.

The protein resides in the cytoplasm. Functionally, responsible for the release of ribosomes from messenger RNA at the termination of protein biosynthesis. May increase the efficiency of translation by recycling ribosomes from one round of translation to another. In Nocardia farcinica (strain IFM 10152), this protein is Ribosome-recycling factor.